The following is a 181-amino-acid chain: Crustacyanin-C1 subunit (181 aa).

Intrachain disulfides connect Cys12–Cys121, Cys51–Cys173, and Cys117–Cys150.

It belongs to the calycin superfamily. Lipocalin family. In terms of assembly, oligomer; Can form dimers (beta-crustacyanin); or complexes of 16 subunits (alpha-crustacyanin). There are five types of subunits: A1, A2, A3, C1 and C2. Found in the carapace.

The protein localises to the secreted. The protein resides in the extracellular space. In terms of biological role, binds the carotenoid astaxanthin (AXT) which provides the blue coloration to the carapace of the lobster. This chain is Crustacyanin-C1 subunit, found in Homarus gammarus (European lobster).